A 155-amino-acid polypeptide reads, in one-letter code: Protein U1 (155 aa).

Belongs to the nanovirus U1 protein family.

The sequence is that of Protein U1 (DNA-U1) from Cicer arietinum (Chickpea).